The primary structure comprises 315 residues: Protoheme IX farnesyltransferase (315 aa).

9 helical membrane-spanning segments follow: residues 21–41 (YFAL…LVGL), 52–74 (VGFC…NMWW), 98–118 (GEAL…LALA), 121–141 (LLAA…YSMW), 150–170 (IVIG…AATG), 177–197 (VLMF…LALF), 223–243 (ILVY…TPVA), 246–266 (LYLA…WDIW), and 284–304 (FFKF…AEAI).

This sequence belongs to the UbiA prenyltransferase family. Protoheme IX farnesyltransferase subfamily. In terms of assembly, interacts with CtaA.

It localises to the cell inner membrane. The enzyme catalyses heme b + (2E,6E)-farnesyl diphosphate + H2O = Fe(II)-heme o + diphosphate. It participates in porphyrin-containing compound metabolism; heme O biosynthesis; heme O from protoheme: step 1/1. Converts heme B (protoheme IX) to heme O by substitution of the vinyl group on carbon 2 of heme B porphyrin ring with a hydroxyethyl farnesyl side group. The polypeptide is Protoheme IX farnesyltransferase (Dinoroseobacter shibae (strain DSM 16493 / NCIMB 14021 / DFL 12)).